The primary structure comprises 122 residues: Ribosomal protein eL22-like (122 aa).

A phosphoserine mark is found at S112, S118, and S120.

The protein belongs to the eukaryotic ribosomal protein eL22 family.

The polypeptide is Ribosomal protein eL22-like (RPL22L1) (Bos taurus (Bovine)).